Reading from the N-terminus, the 498-residue chain is Cytotardin (498 aa).

The tract at residues 18-58 is coil 1A; it reads DRVHSKDELQALNTRLAKYIDKIRNLENENVALQRQLQTAE. An IF rod domain is found at 22–378; it reads SKDELQALNT…KLLSGEEQRL (357 aa). The segment at 59-69 is linker 1; the sequence is QTTVTEIHRVS. Residues 70–213 are coil 1B; that stretch reads KNYDEELAKL…ENLREEKSQR (144 aa). The linker 2 stretch occupies residues 214 to 231; the sequence is QYLLHDLQRGLQDEFESK. The coil 2 stretch occupies residues 232-371; sequence LVQQLNELRA…AELATYNKLL (140 aa). The interval 381 to 425 is disordered; it reads DGSGTVIRRPTGGATGTGSGIYGGTGSGGYSRDIGSTTTTKTTYT. Positions 393–409 are enriched in gly residues; the sequence is GATGTGSGIYGGTGSGG.

It belongs to the intermediate filament family.

It is found in the cytoplasm. Its subcellular location is the cell cortex. In terms of biological role, intermediate filament (IF) protein that forms both short filaments and extensive cytoskeletal networks which most likely are homomeric. Some of the cytotardin arrays display cage-like perinuclear structures, while others are located in the periphery close to the cell membrane. The entire tardigrade body is ensheathed by a grid of belt-like filaments formed by the cytotardin protein, which retain their integrity even in contracted specimens. The belt-like structures encircling each epidermal cell might help to resist the shearing forces that arise during freezing and thawing cycles, whereas the dense meshwork at the basis of each claw and around the stylets might provide the tissue stability necessary for locomotion and feeding. The protein is Cytotardin of Hypsibius exemplaris (Freshwater tardigrade).